The sequence spans 545 residues: Glucose-6-phosphate isomerase (545 aa).

The active-site Proton donor is Glu351. Active-site residues include His382 and Lys510.

This sequence belongs to the GPI family.

It localises to the cytoplasm. The catalysed reaction is alpha-D-glucose 6-phosphate = beta-D-fructose 6-phosphate. The protein operates within carbohydrate biosynthesis; gluconeogenesis. Its pathway is carbohydrate degradation; glycolysis; D-glyceraldehyde 3-phosphate and glycerone phosphate from D-glucose: step 2/4. In terms of biological role, catalyzes the reversible isomerization of glucose-6-phosphate to fructose-6-phosphate. This is Glucose-6-phosphate isomerase from Helicobacter pylori (strain G27).